Reading from the N-terminus, the 268-residue chain is Tryptophan synthase alpha chain (268 aa).

Residues E49 and D60 each act as proton acceptor in the active site.

This sequence belongs to the TrpA family. In terms of assembly, tetramer of two alpha and two beta chains.

The catalysed reaction is (1S,2R)-1-C-(indol-3-yl)glycerol 3-phosphate + L-serine = D-glyceraldehyde 3-phosphate + L-tryptophan + H2O. It participates in amino-acid biosynthesis; L-tryptophan biosynthesis; L-tryptophan from chorismate: step 5/5. Its function is as follows. The alpha subunit is responsible for the aldol cleavage of indoleglycerol phosphate to indole and glyceraldehyde 3-phosphate. The chain is Tryptophan synthase alpha chain from Vibrio parahaemolyticus serotype O3:K6 (strain RIMD 2210633).